A 681-amino-acid polypeptide reads, in one-letter code: Propionyl-CoA carboxylase alpha chain (681 aa).

Residues 1-466 (MFNKILIANR…TTAFIAEEYP (466 aa)) form the Biotin carboxylation domain. ATP contacts are provided by residues Lys116, 148-209 (SNQI…PRHI), Glu200, and Asn235. One can recognise an ATP-grasp domain in the interval 120-317 (KKIAQEANVS…LVEQMIRVAA (198 aa)). 3 residues coordinate Mg(2+): Glu275, Glu288, and Asn290. Mn(2+) is bound by residues Glu275, Glu288, and Asn290. Glu288 is a catalytic residue. Residue Phe348 coordinates biotin. The 80-residue stretch at 602 to 681 (LMPEKLPPDT…AVDDVIMEFE (80 aa)) folds into the Biotinyl-binding domain. Lys647 bears the N6-biotinyllysine mark.

The holoenzyme is a dodecamer composed of 6 PccA/alpha subunits and 6 PccB/beta subunits. Mg(2+) is required as a cofactor. It depends on Mn(2+) as a cofactor. Requires biotin as cofactor. Post-translationally, the biotin cofactor is covalently attached to the C-terminal biotinyl-binding domain and is required for the catalytic activity.

The enzyme catalyses propanoyl-CoA + hydrogencarbonate + ATP = (S)-methylmalonyl-CoA + ADP + phosphate + H(+). Its pathway is metabolic intermediate metabolism; propanoyl-CoA degradation; succinyl-CoA from propanoyl-CoA: step 1/3. This is one of the 2 subunits of the biotin-dependent propionyl-CoA carboxylase (PCC), the enzyme catalyzing the carboxylation of propionyl-CoA/propanoyl-CoA to D-methylmalonyl-CoA/(S)-methylmalonyl-CoA. Within the holoenzyme, the alpha subunit catalyzes the ATP-dependent carboxylation of the biotin carried by the biotin carboxyl carrier (BCC) domain, while the beta subunit then tranfers the carboxyl group from carboxylated biotin to propionyl-CoA. This Ruegeria pomeroyi (strain ATCC 700808 / DSM 15171 / DSS-3) (Silicibacter pomeroyi) protein is Propionyl-CoA carboxylase alpha chain.